Reading from the N-terminus, the 645-residue chain is Octopamine receptor Oamb (645 aa).

Residues 1–25 (MNETECEDLIKSVKWTEPANLISLA) lie on the Extracellular side of the membrane. Residue N2 is glycosylated (N-linked (GlcNAc...) asparagine). The helical transmembrane segment at 26–46 (VLEFINVLVIGGNCLVIAAVF) threads the bilayer. Residues 47-56 (CSNKLRSVTN) lie on the Cytoplasmic side of the membrane. A helical membrane pass occupies residues 57 to 77 (FFIVNLAVADLLVGLAVLPFS). At 78–94 (ATWEVFKVWIFGDLWCR) the chain is on the extracellular side. C93 and C287 form a disulfide bridge. The chain crosses the membrane as a helical span at residues 95 to 115 (IWLAVDVWMCTASILNLCAIS). Residues 116–138 (LDRYVAVTRPVTYPSIMSTKKAK) lie on the Cytoplasmic side of the membrane. A helical transmembrane segment spans residues 139–159 (SLIAGIWVLSFFICFPPLVGW). Residues 160–295 (KDQKAVIQPT…KCELTNDRGY (136 aa)) are Extracellular-facing. The N-linked (GlcNAc...) asparagine glycan is linked to N174. The interval 190–212 (QLGLDSIKDQGEASLPPSPPHIG) is disordered. A helical transmembrane segment spans residues 296–316 (VLYSALGSFYIPMFVMLFFYW). The Cytoplasmic segment spans residues 317–520 (RIYRAAVRTT…FRMETKAAKT (204 aa)). Disordered stretches follow at residues 358 to 386 (GRGS…PSPE) and 479 to 500 (RQSN…KKMG). The span at 369–385 (SNGSTQSTTTTLGTPSP) shows a compositional bias: low complexity. Residues 521–541 (LAIIVGMFIFCWCPFFTMYII) form a helical membrane-spanning segment. At 542–551 (RPFCQDCVDP) the chain is on the extracellular side. Residues 552–572 (LLFSVLFWLGYCNSAVNPMIY) form a helical membrane-spanning segment. The Cytoplasmic portion of the chain corresponds to 573–645 (ALFSKDFRFA…HHSEMSNDPR (73 aa)). The tract at residues 621–645 (TPSAAAHSFGDESELHHSEMSNDPR) is disordered. Over residues 629-645 (FGDESELHHSEMSNDPR) the composition is skewed to basic and acidic residues.

This sequence belongs to the G-protein coupled receptor 1 family. Highly enriched in mushroom body neuropil and in the ellipsoid body (at protein level). Expressed in oviduct epithelium (at protein level). Expressed in the adult and larval brain, thoracic and abdominal ganglia, terminal cells of the larval tracheal system, muscle, mature eggs and reproductive system.

Its subcellular location is the cell membrane. Its function is as follows. Receptor for octopamine (OA) which is a neurotransmitter, neurohormone and neuromodulator in invertebrates. Stimulates intracellular accumulation of cAMP and Ca(2+) following ligand binding. Required for ovulation. Following activation on mature follicle cells by OA, induces activity of the metalloprotease Mmp2 which leads to breakdown of the posterior follicle wall, resulting in ovulation. Ligand binding probably also leads to activation of CamKII which is also required for ovulation. Modulates sleep/wake behavior by acting in neurons of the pars intercerebralis to promote wakefulness. Plays a role in courtship conditioning where the courtship behavior of males rejected by already mated females is inhibited with further females. Required in the mushroom body for appetitive olfactory learning. Specifically conveys the short-term reinforcing effects of sweet taste. In insulin-producing cells of the brain, plays a role in inhibiting transcription of insulin-like peptide Ilp3. Also plays a role in social behavior by modulating male agression. This chain is Octopamine receptor Oamb, found in Drosophila melanogaster (Fruit fly).